Consider the following 288-residue polypeptide: MQAYLNLCRDILNYGKKKIDRTKTGTRSIFGYQMRFNLEKGFPLLTTKKMNFKAIIHELLWFIKGDTNIRYLVQNNVNIWNEWPYQKYCNSNFFQNLTLQEFIDKIIIDEKFAKIHGDLGPIYGHQWRNFQGIDQLTDLISEIKKNPHSRRLILTAWDPTVIKDMLLPPCHVMIQCYVEKNKISMQLYQRSGDVFLGIPFNIASYSLLLIIIAQCTGLKPFEFIHTIGDAHIYNNHIEQIQKQIKRIPKKLPIMTLNPHIIDINQFTFNDFNLEKYESYGILKGVVAV.

Residue Arg-21 participates in dUMP binding. Asn-51 is a binding site for (6R)-5,10-methylene-5,6,7,8-tetrahydrofolate. 150-151 (RR) contributes to the dUMP binding site. Cys-170 serves as the catalytic Nucleophile. Residues 190–193 (RSGD), Asn-201, and 231–233 (HIY) each bind dUMP. Asp-193 is a binding site for (6R)-5,10-methylene-5,6,7,8-tetrahydrofolate. Ala-287 contacts (6R)-5,10-methylene-5,6,7,8-tetrahydrofolate.

This sequence belongs to the thymidylate synthase family. Bacterial-type ThyA subfamily. Homodimer.

Its subcellular location is the cytoplasm. It catalyses the reaction dUMP + (6R)-5,10-methylene-5,6,7,8-tetrahydrofolate = 7,8-dihydrofolate + dTMP. Its pathway is pyrimidine metabolism; dTTP biosynthesis. In terms of biological role, catalyzes the reductive methylation of 2'-deoxyuridine-5'-monophosphate (dUMP) to 2'-deoxythymidine-5'-monophosphate (dTMP) while utilizing 5,10-methylenetetrahydrofolate (mTHF) as the methyl donor and reductant in the reaction, yielding dihydrofolate (DHF) as a by-product. This enzymatic reaction provides an intracellular de novo source of dTMP, an essential precursor for DNA biosynthesis. This Phytoplasma mali (strain AT) protein is Thymidylate synthase.